We begin with the raw amino-acid sequence, 172 residues long: 3-phenylpropionate/cinnamic acid dioxygenase subunit beta (172 aa).

It belongs to the bacterial ring-hydroxylating dioxygenase beta subunit family. In terms of assembly, this dioxygenase system consists of four proteins: the two subunits of the hydroxylase component (HcaE and HcaF), a ferredoxin (HcaC) and a ferredoxin reductase (HcaD).

It catalyses the reaction 3-phenylpropanoate + NADH + O2 + H(+) = 3-(cis-5,6-dihydroxycyclohexa-1,3-dien-1-yl)propanoate + NAD(+). It carries out the reaction (E)-cinnamate + NADH + O2 + H(+) = (2E)-3-(cis-5,6-dihydroxycyclohexa-1,3-dien-1-yl)prop-2-enoate + NAD(+). It participates in aromatic compound metabolism; 3-phenylpropanoate degradation. Functionally, part of the multicomponent 3-phenylpropionate dioxygenase. Converts 3-phenylpropionic acid (PP) and cinnamic acid (CI) into 3-phenylpropionate-dihydrodiol (PP-dihydrodiol) and cinnamic acid-dihydrodiol (CI-dihydrodiol), respectively. This Shigella sonnei (strain Ss046) protein is 3-phenylpropionate/cinnamic acid dioxygenase subunit beta.